The primary structure comprises 259 residues: Ras-related protein Rab-34 (259 aa).

At methionine 1 the chain carries N-acetylmethionine. GTP-binding residues include serine 62, valine 63, glycine 64, lysine 65, threonine 66, aspartate 78, tyrosine 81, and threonine 84. A Mg(2+)-binding site is contributed by threonine 66. Positions 71 to 89 (RFCKDTFDKNYKATIGVDF) match the Switch 1 motif. Residues threonine 84 and aspartate 107 each contribute to the Mg(2+) site. A Switch 2 motif is present at residues 108-127 (TAGQERFKCIASTYYRGAQA). GTP is bound by residues glycine 110, lysine 167, aspartate 169, and serine 198. At serine 241 the chain carries Phosphoserine. S-geranylgeranyl cysteine attachment occurs at residues cysteine 257 and cysteine 258.

The protein belongs to the small GTPase superfamily. Rab family. As to quaternary structure, interacts with RILP. The GTP-bound form interacts with REP15. Mg(2+) serves as cofactor.

The protein localises to the cytoplasm. The protein resides in the golgi apparatus. It is found in the cytoplasmic vesicle. Its subcellular location is the phagosome. It localises to the phagosome membrane. The protein localises to the cell projection. The protein resides in the cilium. It is found in the cytoskeleton. Its subcellular location is the microtubule organizing center. It localises to the centrosome. The protein localises to the centriole. It catalyses the reaction GTP + H2O = GDP + phosphate + H(+). Regulated by guanine nucleotide exchange factors (GEFs) which promote the exchange of bound GDP for free GTP. Regulated by GTPase activating proteins (GAPs) which increase the GTP hydrolysis activity. Inhibited by GDP dissociation inhibitors (GDIs). Its function is as follows. The small GTPases Rab are key regulators of intracellular membrane trafficking, from the formation of transport vesicles to their fusion with membranes. Rabs cycle between an inactive GDP-bound form and an active GTP-bound form that is able to recruit to membranes different sets of downstream effectors directly responsible for vesicle formation, movement, tethering and fusion. RAB34 transports protein involved in the redistribution of lysosomes to the peri-Golgi region. Plays a role in the maturation of phagosomes that engulf pathogens, such as S.aureus and M.tuberculosis. Plays a role in the fusion of phagosomes with lysosomes. Involved in ciliogenesis. In particular, it is required for early steps of the intracellular cilium assembly pathway initiated by trafficking and docking of ciliary vesicles to the centrioles in the cytoplasm, followed by axoneme formation in the cytoplasm. After axoneme elongation, the centrioles migrate close to the cell surface so that ciliary vesicles can fuse with the plasma membrane to expose cilia to the extracellular space. It seems dispensable for ciliogenesis via the extracellular pathway where cilium assembly begins after migration and docking of the centriole to the plasma membrane. Also acts as a positive regulator of hedgehog signaling and regulates ciliary function. The protein is Ras-related protein Rab-34 of Rattus norvegicus (Rat).